Reading from the N-terminus, the 389-residue chain is Na(+)/H(+) antiporter NhaA (389 aa).

11 helical membrane-spanning segments follow: residues 17-37, 59-79, 95-115, 124-144, 154-174, 177-197, 213-233, 261-281, 292-312, 328-348, and 363-383; these read ILLL…LAGF, LLLW…GLEV, SLPT…YLLF, AGWA…MALL, VFLL…IALF, SDLS…LVAL, LILW…GVII, FLIL…NMSL, IALG…FVAV, IAPV…IASL, and LGTL…LSKV.

The protein belongs to the NhaA Na(+)/H(+) (TC 2.A.33) antiporter family.

It localises to the cell inner membrane. The catalysed reaction is Na(+)(in) + 2 H(+)(out) = Na(+)(out) + 2 H(+)(in). Functionally, na(+)/H(+) antiporter that extrudes sodium in exchange for external protons. In Shewanella oneidensis (strain ATCC 700550 / JCM 31522 / CIP 106686 / LMG 19005 / NCIMB 14063 / MR-1), this protein is Na(+)/H(+) antiporter NhaA.